The primary structure comprises 667 residues: 1-deoxy-D-xylulose-5-phosphate synthase (667 aa).

Thiamine diphosphate is bound by residues histidine 73 and 113-115 (SHA). Aspartate 145 is a binding site for Mg(2+). Thiamine diphosphate contacts are provided by residues 146–147 (GA), asparagine 175, tyrosine 297, and glutamate 379. Asparagine 175 provides a ligand contact to Mg(2+).

The protein belongs to the transketolase family. DXPS subfamily. As to quaternary structure, homodimer. It depends on Mg(2+) as a cofactor. The cofactor is thiamine diphosphate.

It carries out the reaction D-glyceraldehyde 3-phosphate + pyruvate + H(+) = 1-deoxy-D-xylulose 5-phosphate + CO2. It functions in the pathway metabolic intermediate biosynthesis; 1-deoxy-D-xylulose 5-phosphate biosynthesis; 1-deoxy-D-xylulose 5-phosphate from D-glyceraldehyde 3-phosphate and pyruvate: step 1/1. Functionally, catalyzes the acyloin condensation reaction between C atoms 2 and 3 of pyruvate and glyceraldehyde 3-phosphate to yield 1-deoxy-D-xylulose-5-phosphate (DXP). The protein is 1-deoxy-D-xylulose-5-phosphate synthase of Kocuria rhizophila (strain ATCC 9341 / DSM 348 / NBRC 103217 / DC2201).